The primary structure comprises 315 residues: tRNA pseudouridine synthase B (315 aa).

D54 functions as the Nucleophile in the catalytic mechanism.

Belongs to the pseudouridine synthase TruB family. Type 1 subfamily.

The enzyme catalyses uridine(55) in tRNA = pseudouridine(55) in tRNA. In terms of biological role, responsible for synthesis of pseudouridine from uracil-55 in the psi GC loop of transfer RNAs. This Agrobacterium fabrum (strain C58 / ATCC 33970) (Agrobacterium tumefaciens (strain C58)) protein is tRNA pseudouridine synthase B.